A 593-amino-acid chain; its full sequence is Probable tripeptidyl-peptidase SED3 (593 aa).

The first 18 residues, M1–A18, serve as a signal peptide directing secretion. A propeptide spans F19 to N198 (removed in mature form). N-linked (GlcNAc...) asparagine glycans are attached at residues N204, N261, and N275. Residues T206–M592 enclose the Peptidase S53 domain. Active-site charge relay system residues include E282 and D286. N-linked (GlcNAc...) asparagine glycosylation occurs at N295. Residue S496 is the Charge relay system of the active site. Ca(2+) contacts are provided by D538 and I539. N-linked (GlcNAc...) asparagine glycans are attached at residues N554 and N566. Ca(2+) contacts are provided by G570 and D572.

Ca(2+) serves as cofactor.

It is found in the secreted. It localises to the extracellular space. It carries out the reaction Release of an N-terminal tripeptide from a polypeptide.. In terms of biological role, secreted tripeptidyl-peptidase which degrades proteins at acidic pHs and is involved in virulence. This is Probable tripeptidyl-peptidase SED3 (SED3) from Arthroderma benhamiae (strain ATCC MYA-4681 / CBS 112371) (Trichophyton mentagrophytes).